Consider the following 772-residue polypeptide: Semaphorin-3A (772 aa).

The first 20 residues, 1-20, serve as a signal peptide directing secretion; the sequence is MGWFTGIACLFWGVLLTARA. Residues 31–514 enclose the Sema domain; it reads RLKLSYKEML…STAGVAQLPL (484 aa). Asparagine 53 carries N-linked (GlcNAc...) asparagine glycosylation. Cysteine 103 and cysteine 114 are oxidised to a cystine. An N-linked (GlcNAc...) asparagine glycan is attached at asparagine 125. 4 disulfides stabilise this stretch: cysteine 132–cysteine 141, cysteine 269–cysteine 381, cysteine 293–cysteine 341, and cysteine 517–cysteine 535. The 87-residue stretch at 579 to 665 folds into the Ig-like C2-type domain; the sequence is PSLEERIIYG…GFMQTLLKVT (87 aa). A glycan (N-linked (GlcNAc...) asparagine) is linked at asparagine 591. A disulfide bridge links cysteine 650 with cysteine 723. The segment covering 729–738 has biased composition (basic residues); the sequence is RDRKQRRQRP. Residues 729 to 772 are disordered; it reads RDRKQRRQRPGHSQGSSNKWKHMQESKKGRNRRTHEFERAPRSV. Residues 750-772 show a composition bias toward basic and acidic residues; the sequence is HMQESKKGRNRRTHEFERAPRSV.

The protein belongs to the semaphorin family. Interacts with PXND1.

The protein resides in the secreted. Plays a role in growth cones guidance. May function to pattern sensory projections by selectively repelling axons that normally terminate dorsally. Involved in the development of the olfactory system and in neuronal control of puberty. This is Semaphorin-3A (Sema3a) from Mus musculus (Mouse).